Consider the following 650-residue polypeptide: DNA topoisomerase 3 (650 aa).

Residues 1 to 134 (MRLFIAEKPS…KLNQIQRCLI (134 aa)) enclose the Toprim domain. Mg(2+) is bound by residues Glu7, Asp103, and Asp105. A Topo IA-type catalytic domain is found at 155-617 (FIPLATSALA…TLTNFLPELM (463 aa)). The segment at 194–199 (SVGRVQ) is interaction with DNA. The active-site O-(5'-phospho-DNA)-tyrosine intermediate is Tyr342.

It belongs to the type IA topoisomerase family. Mg(2+) is required as a cofactor.

The enzyme catalyses ATP-independent breakage of single-stranded DNA, followed by passage and rejoining.. Releases the supercoiling and torsional tension of DNA, which is introduced during the DNA replication and transcription, by transiently cleaving and rejoining one strand of the DNA duplex. Introduces a single-strand break via transesterification at a target site in duplex DNA. The scissile phosphodiester is attacked by the catalytic tyrosine of the enzyme, resulting in the formation of a DNA-(5'-phosphotyrosyl)-enzyme intermediate and the expulsion of a 3'-OH DNA strand. The free DNA strand then undergoes passage around the unbroken strand, thus removing DNA supercoils. Finally, in the religation step, the DNA 3'-OH attacks the covalent intermediate to expel the active-site tyrosine and restore the DNA phosphodiester backbone. The polypeptide is DNA topoisomerase 3 (Pasteurella multocida (strain Pm70)).